We begin with the raw amino-acid sequence, 166 residues long: Large ribosomal subunit protein eL14 (166 aa).

Residues 135-166 form a disordered region; it reads KADGTPRVLKKDRRERLRAEKAKGGKKAAAKK. Residues 146–157 show a composition bias toward basic and acidic residues; that stretch reads DRRERLRAEKAK.

Belongs to the eukaryotic ribosomal protein eL14 family.

This is Large ribosomal subunit protein eL14 (RpL14) from Drosophila melanogaster (Fruit fly).